We begin with the raw amino-acid sequence, 179 residues long: Large ribosomal subunit protein uL6 (179 aa).

Belongs to the universal ribosomal protein uL6 family. As to quaternary structure, part of the 50S ribosomal subunit.

In terms of biological role, this protein binds to the 23S rRNA, and is important in its secondary structure. It is located near the subunit interface in the base of the L7/L12 stalk, and near the tRNA binding site of the peptidyltransferase center. This Clostridium novyi (strain NT) protein is Large ribosomal subunit protein uL6.